Here is a 630-residue protein sequence, read N- to C-terminus: Coiled-coil domain-containing protein 120 (630 aa).

An involved in CYTH2-binding region spans residues 31–70 (RLRGLLDRQRTLQEALSLKLQELRKVCLQEAELTGQLPPE). A coiled-coil region spans residues 109 to 173 (ELALEALERE…LRDVRARLGL (65 aa)). 2 stretches are compositionally biased toward low complexity: residues 212-222 (HSESSSLSESG) and 282-297 (ASPTSPTRSLPRSASS). Disordered stretches follow at residues 212-435 (HSES…GAPR) and 457-534 (GGGT…NPLL). Residues 326–335 (RQWSGSQDSQ) show a composition bias toward polar residues. Phosphoserine is present on residues S358 and S360. Residues 421-434 (ARPSSAAPASRGAP) are compositionally biased toward low complexity. An Omega-N-methylarginine modification is found at R435.

As to quaternary structure, interacts with NIN and CEP170; leading to recruit them to centrosomes. Directly interacts with CYTH2; this interaction stabilizes CCDC120, possibly by preventing ubiquitination. In terms of processing, ubiquitinated; interaction with CYTH2 may prevent ubiquitination.

Its subcellular location is the cytoplasm. The protein resides in the cytoskeleton. The protein localises to the microtubule organizing center. It is found in the centrosome. It localises to the centriole. Its subcellular location is the cell projection. The protein resides in the neuron projection. The protein localises to the growth cone. It is found in the endosome. Its function is as follows. Centriolar protein required for centriole subdistal appendage assembly and microtubule anchoring in interphase cells. Together with CCDC68, cooperate with subdistal appendage components ODF2, NIN and CEP170 for hierarchical subdistal appendage assembly. Recruits NIN and CEP170 to centrosomes. Also required for neurite growth. Localizes CYTH2 to vesicles to allow its transport along neurites, and subsequent ARF6 activation and neurite growth. In Homo sapiens (Human), this protein is Coiled-coil domain-containing protein 120 (CCDC120).